We begin with the raw amino-acid sequence, 277 residues long: Transcription factor HES-4-B (277 aa).

Residues 1-44 (MPADSMEKPTASPIAGAPANSAQTPDKPKSASEHRKSSKPIMEK) form a disordered region. A compositionally biased stretch (basic and acidic residues) spans 26 to 35 (DKPKSASEHR). Residues 34-91 (HRKSSKPIMEKRRRARINESLGQLKTLILDALKKDSSRHSKLEKADILEMTVKHLRNL) form the bHLH domain. The 34-residue stretch at 110 to 143 (YRAGFNECMNEVTRFLSTCEGVNTEVRTRLLGHL) folds into the Orange domain. Positions 258–277 (VSPLGGSTRADSAESVWRPW) are disordered. The short motif at 274–277 (WRPW) is the WRPW motif element.

In terms of assembly, transcription repression requires formation of a complex with a corepressor protein of the Groucho/TLE family. Interacts with the bHLH protein hes6; this interaction may inhibit the transcriptional repressor activity. Binds DNA in the form of a heterodimer with the bHLH protein hey1/hrt1. Interacts (via Orange domain) with id3 (via HLH domain). As to expression, dynamically expressed in the borders of several tissue territories. Expressed in the pre-placodal ectoderm (PPE) from gastrula stage. During gastrulation, expressed in the deep layer of the dorsal lip, the Spemann organizer and three distinct regions in the prospective neuroectoderm: neural plate border, presumptive floor plate/notoplate and anterior neural plate. At later stages, expression is localized to the anterior of the prechordal plate, the presomitic mesoderm, neural tube, neural crest derivatives and several tissues of the central nervous system, with expression in the developing floor plate continues to at least the tadpole stage. From the early tailbud stage, expressed in the dorsoanterior region of the developing pronephros. During early tailbud stages, broadly expressed within the pronephric mesoderm. and in the sensorial layer of the ectoderm covering the pronephros anlagen. During late tailbud to early tadpole stages, expressed in the ventral region of the pronephros. Expression remains in the proximal and distal tubules at late tadpole stages (stage 35).

The protein localises to the nucleus. In terms of biological role, transcriptional repressor. Binds DNA on N-box motifs: 5'-CACNAG-3'. Promotes floor plate development and prechordal plate development. Required for lens development as early as the stage of lens field formation, partly through regulation of gene expression of the cell cycle inhibitor cdknx/p27(xic1). Required for formation of the neural crest downstream of multiple signaling pathways, and acts at the neural plate border via both DNA-binding dependent and independent mechanisms; acts in a DNA-binding dependent manner to repress pro-apoptotic and neural crest differentiation genes, including id3, delta1, and cdknx/p27(xic1), and thus promote the cell survival of neural plate border cells and maintain them in an undifferentiated state. Represses transcription of id3, at least in part through the repression of bmp4. On the other hand, acts in a DNA-independent manner separate from the transcriptional repressor function, to stimulate cell proliferation and promote neural crest formation. Via this DNA-independent route, acts in neurulae upstream of stat3 to transiently up-regulate the notch ligand dll1/delta1, which in turn up-regulates id3 expression. Then interacts directly with id3, which blocks the transcriptional repressor function of hes4-B/hairy2b to allow the progression of neural crest progenitors through specification and differentiation. Also acts via repressor-dependent and repressor-independent mechanisms in early gastrulae to establish the prospective anterior prechordal mesoderm identity in the Spemann organizer; induces specific genes independently from direct transcriptional regulation, and represses the genes specific for neighboring tissues through direct transcriptional repression. Modulates lateral inhibition during notch signaling and regulates the cell context dependent effects of notch (which can have inhibitory, permissive or enhancing roles in muscle or neural differentiation). Inhibits myogenesis. The sequence is that of Transcription factor HES-4-B (hes4-b) from Xenopus laevis (African clawed frog).